Here is a 252-residue protein sequence, read N- to C-terminus: 14-3-3 protein homolog 1 (252 aa).

This sequence belongs to the 14-3-3 family.

In Schistosoma mansoni (Blood fluke), this protein is 14-3-3 protein homolog 1.